The sequence spans 455 residues: MTRPVVAIIGRPNVGKSTLVNRLCRSREAIVHDQPGVTRDRTYQDGYWGDREFKVVDTGGLVFDDDSEFLPEIREQAALALEEASVALVIVDGQQGLTAADESIAEFLRSHRCPTLLAVNKCESPEQGLAMAGEFWSLGLGEPHPISAIHGAGTGELLDQVLTFLPPKDQEGDEEEPIQMAIIGRPNVGKSSLLNAICGEQRAIVSPIRGTTRDTIDTSIIRENRPWRLVDTAGIRRRRSVNYGPEFFGINRSFKAIERSDVCVLVIDALDGVTEQDQRLAGRIEEDGRACVVVVNKWDALEKDSHTMTAMEKELRSKLYFLDWAPMLFTSALTGQRVESIFALAALAVEQHRRRVSTSVVNEVLKEALSWRSPPTTRGGRQGKLYYGTQVASRPPSFTLFVNDPKMFGETYRRYVERQIREGLGFDGSPLRLFWRGKQQRDAERDLARQQSRKG.

EngA-type G domains lie at 4 to 169 (PVVA…PPKD) and 178 to 353 (IQMA…EQHR). Residues 10 to 17 (GRPNVGKS), 57 to 61 (DTGGL), 120 to 123 (NKCE), 184 to 191 (GRPNVGKS), 231 to 235 (DTAGI), and 296 to 299 (NKWD) each bind GTP. The region spanning 354 to 439 (RRVSTSVVNE…PLRLFWRGKQ (86 aa)) is the KH-like domain.

The protein belongs to the TRAFAC class TrmE-Era-EngA-EngB-Septin-like GTPase superfamily. EngA (Der) GTPase family. Associates with the 50S ribosomal subunit.

Its function is as follows. GTPase that plays an essential role in the late steps of ribosome biogenesis. The chain is GTPase Der from Synechococcus sp. (strain CC9605).